A 159-amino-acid polypeptide reads, in one-letter code: Keratin-associated protein 9-3 (159 aa).

16 consecutive repeat copies span residues 8–12 (CCQPT), 13–17 (CCRTT), 32–36 (CCQPS), 37–41 (CCVSS), 46–50 (CCHPT), 51–55 (CCQNT), 56–60 (CCRTT), 61–65 (CCQPI), 70–74 (CCQPS), 75–79 (CCSTP), 80–84 (CCQPT), 85–89 (CCGSS), 129–133 (CCRPA), 134–138 (CCETT), 139–143 (CCRTT), and 153–157 (CCQPS). The 16 X 5 AA repeats of C-C-[RQVSHE]-[SPTN]-[TASPI] stretch occupies residues 8–157 (CCQPTCCRTT…TCVYSCCQPS (150 aa)).

The protein belongs to the KRTAP type 9 family. As to quaternary structure, interacts with hair keratins.

Functionally, in the hair cortex, hair keratin intermediate filaments are embedded in an interfilamentous matrix, consisting of hair keratin-associated proteins (KRTAP), which are essential for the formation of a rigid and resistant hair shaft through their extensive disulfide bond cross-linking with abundant cysteine residues of hair keratins. The matrix proteins include the high-sulfur and high-glycine-tyrosine keratins. This is Keratin-associated protein 9-3 (KRTAP9-3) from Homo sapiens (Human).